A 680-amino-acid polypeptide reads, in one-letter code: DNA-directed RNA polymerase subunit beta' (680 aa).

C69, C71, C87, and C90 together coordinate Zn(2+). Residues D489, D491, and D493 each contribute to the Mg(2+) site.

It belongs to the RNA polymerase beta' chain family. RpoC1 subfamily. In plastids the minimal PEP RNA polymerase catalytic core is composed of four subunits: alpha, beta, beta', and beta''. When a (nuclear-encoded) sigma factor is associated with the core the holoenzyme is formed, which can initiate transcription. It depends on Mg(2+) as a cofactor. Zn(2+) is required as a cofactor.

The protein resides in the plastid. It is found in the chloroplast. It carries out the reaction RNA(n) + a ribonucleoside 5'-triphosphate = RNA(n+1) + diphosphate. In terms of biological role, DNA-dependent RNA polymerase catalyzes the transcription of DNA into RNA using the four ribonucleoside triphosphates as substrates. In Olimarabidopsis pumila (Dwarf rocket), this protein is DNA-directed RNA polymerase subunit beta'.